Here is a 129-residue protein sequence, read N- to C-terminus: KVYGRCELAAAMKRLGLDNYRGYSLGNWVCAAKFESNFNTHATNRNTDGSTDYGILQINSRWWCNDGRTPGSRNLCNIPCSALLSSDITASVNCAKKIVSGGNGMSAWVAWRNRCKGTDVHAWIRGCRL.

The 129-residue stretch at 1 to 129 folds into the C-type lysozyme domain; sequence KVYGRCELAA…VHAWIRGCRL (129 aa). 4 disulfide bridges follow: Cys6/Cys127, Cys30/Cys115, Cys64/Cys80, and Cys76/Cys94. Residues Glu35 and Asp52 contribute to the active site.

This sequence belongs to the glycosyl hydrolase 22 family. In terms of assembly, monomer.

Its subcellular location is the secreted. The enzyme catalyses Hydrolysis of (1-&gt;4)-beta-linkages between N-acetylmuramic acid and N-acetyl-D-glucosamine residues in a peptidoglycan and between N-acetyl-D-glucosamine residues in chitodextrins.. Functionally, lysozymes have primarily a bacteriolytic function; those in tissues and body fluids are associated with the monocyte-macrophage system and enhance the activity of immunoagents. The chain is Lysozyme C (LYZ) from Tragopan temminckii (Temminck's tragopan).